Consider the following 395-residue polypeptide: uncharacterized protein (395 aa).

12 consecutive transmembrane segments (helical) span residues 12-34 (LLAS…TIYL), 44-66 (LIGY…FGIL), 75-94 (YMLL…TLVN), 99-121 (VVLF…KAWF), 134-156 (FSIN…TLLV), 160-182 (INLP…QIWV), 208-230 (LLWF…SCIS), 245-264 (VVAV…QYSV), 271-293 (ANIR…GFIF), 298-320 (LLLW…PGEY), 341-360 (LGWL…LTSL), and 364-381 (SLFV…VLML).

Belongs to the major facilitator superfamily.

It localises to the cell inner membrane. In terms of biological role, a transporter able to export peptides. When overexpressed, allows cells deleted for multiple peptidases (pepA, pepB, pepD and pepN) to grow in the presence of dipeptides Ala-Gln or Gly-Tyr which otherwise inhibit growth. Cells overexpressing this protein have decreased intracellular levels of Ala-Gln dipeptide, and in a system that produces the Ala-Gln dipeptide overproduction of this protein increases export of the dipeptide. This is an uncharacterized protein from Escherichia coli (strain K12).